Here is a 260-residue protein sequence, read N- to C-terminus: Putative ABC transporter ATP-binding protein PYRAB01300 (260 aa).

The ABC transporter domain occupies 2 to 234 (IEFKDVWFWY…DLRNFSLVEP (233 aa)). 34-41 (GPNGSGKT) serves as a coordination point for ATP.

The protein belongs to the ABC transporter superfamily.

It localises to the cell membrane. Probably part of an ABC transporter complex. Responsible for energy coupling to the transport system. The polypeptide is Putative ABC transporter ATP-binding protein PYRAB01300 (Pyrococcus abyssi (strain GE5 / Orsay)).